The following is a 674-amino-acid chain: Translation factor GUF1, mitochondrial (674 aa).

A mitochondrion-targeting transit peptide spans 1–48; it reads MRGCLQPARWLTTATLRRPLLSCPRQLPTRYNPFPRPFHHAPVLQARQ. The tr-type G domain maps to 66 to 246; that stretch reads ERYRNFCIVA…AIIESIPALL (181 aa). GTP is bound by residues 75–82, 139–143, and 193–196; these read AHVDHGKS, DTPGH, and NKVD.

The protein belongs to the TRAFAC class translation factor GTPase superfamily. Classic translation factor GTPase family. LepA subfamily.

The protein localises to the mitochondrion inner membrane. It carries out the reaction GTP + H2O = GDP + phosphate + H(+). Its function is as follows. Promotes mitochondrial protein synthesis. May act as a fidelity factor of the translation reaction, by catalyzing a one-codon backward translocation of tRNAs on improperly translocated ribosomes. Binds to mitochondrial ribosomes in a GTP-dependent manner. This is Translation factor GUF1, mitochondrial from Arthroderma otae (strain ATCC MYA-4605 / CBS 113480) (Microsporum canis).